The sequence spans 127 residues: Anti-adapter protein IraD (127 aa).

The protein belongs to the GpW/Gp25 family. IraD subfamily. Interacts with RssB.

It localises to the cytoplasm. In terms of biological role, inhibits RpoS proteolysis by regulating RssB activity, thereby increasing the stability of the sigma stress factor RpoS during oxidative stress. Its effect on RpoS stability is due to its interaction with RssB, which probably blocks the interaction of RssB with RpoS, and the consequent delivery of the RssB-RpoS complex to the ClpXP protein degradation pathway. This is Anti-adapter protein IraD from Escherichia coli (strain SMS-3-5 / SECEC).